The sequence spans 1642 residues: Cobra venom factor (1642 aa).

The N-terminal stretch at 1 to 22 (MERMALYLVAALLIGFPGSSHG) is a signal peptide. N-linked (GlcNAc...) asparagine glycosylation is found at N153, N158, and N209. Mg(2+) is bound by residues P516, D539, V540, and D542. 12 cysteine pairs are disulfide-bonded: C544–C801, C609–C644, C677–C704, C678–C711, C691–C712, C857–C1492, C1340–C1468, C1368–C1437, C1485–C1490, C1497–C1569, C1516–C1640, and C1616–C1625. Residues 650-732 (RRRRSSVLLL…QRESELFLAR (83 aa)) constitute a propeptide that is removed on maturation. The segment at 654–732 (SSVLLLDSNA…QRESELFLAR (79 aa)) is C3a-like domain. Residues 677-712 (CCEDVMHENPMGYTCEKRAKYIQEGDACKAAFLECC) enclose the Anaphylatoxin-like domain. The interval 736–747 (EDGFIADSDIIS) is factor B binding site. A propeptide spanning residues 985 to 1263 (HLIITPSGCG…VMAFQALAEY (279 aa)) is cleaved from the precursor. A C3d-like domain region spans residues 985–1263 (HLIITPSGCG…VMAFQALAEY (279 aa)). A cross-link (isoglutamyl cysteine thioester (Cys-Gln)) is located at residues 993–996 (CGEQ). The segment at 1190-1253 (VLMAASTGRD…GETYGQTQAT (64 aa)) is factor H binding site. A glycan (N-linked (GlcNAc...) asparagine) is linked at N1346. The NTR domain maps to 1497 to 1640 (CSSLNHQERI…FSYTLTEFGC (144 aa)).

Belongs to the venom complement C3 homolog family. In terms of assembly, heterotrimer of alpha, beta and gamma chains; disulfide-linked. Is active with factor B in the presence of factor D. First processed by the removal of 4 Arg residues by furin-type protease, forming two chains, alpha and gamma/beta precursor, linked by a disulfide bond. Probably, the cobrin cleaves the C3a-like domain and then the C3d-like domain, generating the mature cobra venom factor (CVF). This mature CVF is composed of three chains: alpha, gamma and beta. Post-translationally, contains 3 N-linked oligosaccharide chains, two in the alpha-chain and one in the beta-chain. Glycosylation is not required for the biological activity. However, it contributes to the immunogenicity of CVF. The carbohydrate content is 7.4. The major oligosaccharide is a symmetric fucosylated biantennary complex-type chain with an unusual alpha-galactosylated Le(x) structure at its non-reducing end. As to expression, expressed by the venom gland.

The protein localises to the secreted. Complement-activating protein in cobra venom. It is a structural and functional analog of complement component C3b, the activated form of C3. It binds factor B (CFB), which is subsequently cleaved by factor D (CFD) to form the bimolecular complex CVF/Bb. CVF/Bb is a C3/C5 convertase that cleaves both complement components C3 and C5. Structurally, it resembles the C3b degradation product C3c, which is not able to form a C3/C5 convertase. Unlike C3b/Bb, CVF/Bb is a stable complex and completely resistant to the actions of complement regulatory factors H (CFH) and I (CFI). Therefore, CVF continuously activates complement resulting in the depletion of complement activity. This Naja kaouthia (Monocled cobra) protein is Cobra venom factor.